A 729-amino-acid chain; its full sequence is MAPPAKRAKRGWVPPGYKYLGPGNSLDQGEPTNPSDAAAKEHDEAYDQYIKSGKNPYLYFSAADQRFIDQTKDAKDWGGKVGHYFFRTKRAFAPKLATDSEPGTSGVSRAGKRTRPPAYIFINQARAKKKLTSSAAQQSSQTMSDGTSQPDSGNAVHSAARVERAADGPGGSGGGGSGGGGVGVSTGSYDNQTHYRFLGDGWVEITALATRLVHLNMPKSENYCRIRVHNTTDTSVKGNMAKDDAHEQIWTPWSLVDANAWGVWLQPSDWQYICNTMSQLNLVSLDQEIFNVVLKTVTEQDLGGQAIKIYNNDLTACMMVAVDSNNILPYTPAANSMETLGFYPWKPTIASPYRYYFCVDRDLSVTYENQEGTVEHNVMGTPKGMNSQFFTIENTQQITLLRTGDEFATGTYYFDTNSVKLTHTWQTNRQLGQPPLLSTFPEADTDAGTLTAQGSRHGTTQMGVNWVSEAIRTRPAQVGFCQPHNDFEASRAGPFAAPKVPADITQGVDKEANGSVRYSYGKQHGENWASHGPAPERYTWDETSFGSGRDTKDGFIQSAPLVVPPPLNGILTNANPIGTKNDIHFSNVFNSYGPLTAFSHPSPVYPQGQIWDKELDLEHKPRLHITAPFVCKNNAPGQMLVRLGPNLTDQYDPNGATLSRIVTYGTFFWKGKLTMRAKLRANTTWNPVYQVSAEDNGNSYMSVTKWLPTATGNMQSVPLITRPVARNTY.

Positions 1 to 10 (MAPPAKRAKR) are enriched in basic residues. 3 disordered regions span residues 1-38 (MAPP…SDAA), 96-115 (LATD…KRTR), and 130-185 (KLTS…VGVS). The Nuclear localization signal motif lies at 4–13 (PAKRAKRGWV). The phospholipase A2-like stretch occupies residues 19–64 (YLGPGNSLDQGEPTNPSDAAAKEHDEAYDQYIKSGKNPYLYFSAAD). The segment covering 25-35 (SLDQGEPTNPS) has biased composition (polar residues). The span at 132–142 (TSSAAQQSSQT) shows a compositional bias: low complexity. Polar residues predominate over residues 143-152 (MSDGTSQPDS). The segment covering 168–184 (GPGGSGGGGSGGGGVGV) has biased composition (gly residues). Asn-325 is a binding site for Mg(2+).

Belongs to the parvoviridae capsid protein family.

It is found in the virion. Its subcellular location is the host nucleus. In terms of biological role, capsid protein self-assembles to form an icosahedral capsid with a T=1 symmetry, about 22 nm in diameter, and consisting of 60 copies of two size variants of the capsid proteins, VP1 and VP2, which differ by the presence of an N-terminal extension in the minor protein VP1. The capsid encapsulates the genomic ssDNA. Capsid proteins are responsible for the attachment to host cell receptors. This attachment induces virion internalization predominantly through clathrin-dependent endocytosis. Binding to the host receptors also induces capsid rearrangements leading to surface exposure of VP1 N-terminus, specifically its phospholipase A2-like region and putative nuclear localization signal(s). VP1 N-terminus might serve as a lipolytic enzyme to breach the endosomal membrane during entry into host cell and might contribute to virus transport to the nucleus. In Mus musculus (Mouse), this protein is Capsid protein VP1.